The following is a 119-amino-acid chain: MSDTSEEIPNFEEMFASRFTKDDKEYQEYLKRPPESPPIVEEWNSRAGGNQRNRGNWLQDNRQFRGRDNRRGWPSDNRSNQWHGRSWGNNNYPQQRPEPYYQQQYTQYGHNQRPPYGYY.

Residues 1-55 (MSDTSEEIPNFEEMFASRFTKDDKEYQEYLKRPPESPPIVEEWNSRAGGNQRNRG) form an interaction with RNMT region. The segment at 30–119 (LKRPPESPPI…HNQRPPYGYY (90 aa)) is disordered. The residue at position 36 (S36) is a Phosphoserine. Residues 36 to 42 (SPPIVEE) carry the RNMT-activating domain motif. The segment covering 47–61 (AGGNQRNRGNWLQDN) has biased composition (polar residues). The segment at 56 to 119 (NWLQDNRQFR…HNQRPPYGYY (64 aa)) is RNA-binding. The segment covering 62 to 73 (RQFRGRDNRRGW) has biased composition (basic and acidic residues). Omega-N-methylarginine is present on R85. Phosphoserine is present on S86. The segment covering 89 to 112 (NNNYPQQRPEPYYQQQYTQYGHNQ) has biased composition (low complexity).

The protein belongs to the RAM family. Interacts with RNMT; this interaction enhances mRNA binding and cap methyltransferase activity.

It is found in the nucleus. In terms of biological role, regulatory subunit of the mRNA-capping methyltransferase RNMT:RAMAC complex that methylates the N7 position of the added guanosine to the 5'-cap structure of mRNAs. Promotes the recruitment of the methyl donor, S-adenosyl-L-methionine, to RNMT. Regulates RNMT expression by a post-transcriptional stabilizing mechanism. Binds RNA. This Mus musculus (Mouse) protein is RNA guanine-N7 methyltransferase activating subunit (Ramac).